Reading from the N-terminus, the 226-residue chain is Thiamine-phosphate synthase (226 aa).

4-amino-2-methyl-5-(diphosphooxymethyl)pyrimidine-binding positions include 46 to 50 and aspartate 83; that span reads QFRDK. 2 residues coordinate Mg(2+): aspartate 84 and aspartate 103. Serine 122 is a 4-amino-2-methyl-5-(diphosphooxymethyl)pyrimidine binding site. A 2-[(2R,5Z)-2-carboxy-4-methylthiazol-5(2H)-ylidene]ethyl phosphate-binding site is contributed by 149–151; the sequence is TQS. A 4-amino-2-methyl-5-(diphosphooxymethyl)pyrimidine-binding site is contributed by lysine 152. 2-[(2R,5Z)-2-carboxy-4-methylthiazol-5(2H)-ylidene]ethyl phosphate is bound by residues glycine 181 and 201 to 202; that span reads IT.

Belongs to the thiamine-phosphate synthase family. The cofactor is Mg(2+).

The catalysed reaction is 2-[(2R,5Z)-2-carboxy-4-methylthiazol-5(2H)-ylidene]ethyl phosphate + 4-amino-2-methyl-5-(diphosphooxymethyl)pyrimidine + 2 H(+) = thiamine phosphate + CO2 + diphosphate. It catalyses the reaction 2-(2-carboxy-4-methylthiazol-5-yl)ethyl phosphate + 4-amino-2-methyl-5-(diphosphooxymethyl)pyrimidine + 2 H(+) = thiamine phosphate + CO2 + diphosphate. It carries out the reaction 4-methyl-5-(2-phosphooxyethyl)-thiazole + 4-amino-2-methyl-5-(diphosphooxymethyl)pyrimidine + H(+) = thiamine phosphate + diphosphate. The protein operates within cofactor biosynthesis; thiamine diphosphate biosynthesis; thiamine phosphate from 4-amino-2-methyl-5-diphosphomethylpyrimidine and 4-methyl-5-(2-phosphoethyl)-thiazole: step 1/1. Functionally, condenses 4-methyl-5-(beta-hydroxyethyl)thiazole monophosphate (THZ-P) and 2-methyl-4-amino-5-hydroxymethyl pyrimidine pyrophosphate (HMP-PP) to form thiamine monophosphate (TMP). The sequence is that of Thiamine-phosphate synthase from Haemophilus influenzae (strain 86-028NP).